A 255-amino-acid polypeptide reads, in one-letter code: Staphylococcal secretory antigen ssaA1 (255 aa).

The signal sequence occupies residues 1 to 26 (MKKIVTATIATAGLATIAFAGHDAQA). Tandem repeats lie at residues 75-78 (YNNY), 88-91 (YNNY), and 98-101 (YNNY). A 3 X 4 AA repeats of Y-N-N-Y region spans residues 75–101 (YNNYNTYSYNNASYNNYYNHSYQYNNY). In terms of domain architecture, Peptidase C51 spans 134–255 (AAPSSNGRSI…NQAGSYNFIH (122 aa)).

It is found in the secreted. Not known; immunogenic protein. The polypeptide is Staphylococcal secretory antigen ssaA1 (ssaA1) (Staphylococcus aureus (strain MW2)).